We begin with the raw amino-acid sequence, 901 residues long: HTH-type transcriptional regulator MalT (901 aa).

39–46 (SPAGYGKT) contributes to the ATP binding site. Positions 829-894 (ELIRTSPLTQ…AAVQHAQKLL (66 aa)) constitute an HTH luxR-type domain. A DNA-binding region (H-T-H motif) is located at residues 853-872 (NEQIAGELEVAATTIKTHIR).

The protein belongs to the MalT family. Monomer in solution. Oligomerizes to an active state in the presence of the positive effectors ATP and maltotriose.

Activated by ATP and maltotriose, which are both required for DNA binding. Functionally, positively regulates the transcription of the maltose regulon whose gene products are responsible for uptake and catabolism of malto-oligosaccharides. Specifically binds to the promoter region of its target genes, recognizing a short DNA motif called the MalT box. In Shigella flexneri serotype 5b (strain 8401), this protein is HTH-type transcriptional regulator MalT.